The chain runs to 514 residues: MKYRDLRDFLAQLERQGELKRITAPVSTRLEMTEIADRVLRAGGPALLFENARHNDAPADMPVLANLFGTPRRVAWGMGADDVGALRETGELLASLREPEAPKGLRDALAKVSMLKAALWDMSPKTVRSAACQEIVWEGADVELSRLPIQTCWPGDVAPLLAWGLVITRGPNARRQNLGIYRQQPLGPNKLIMRWLSHRGGALDFRDHAQAHPGKPFPITVALGADPATILGAVTPVPDTLSEYQFAGLLRGSRTEVVKALGSDLSVPASAEIVLEGHLLPADDPRAVAAVVPEGANPPPATGYEMALEGPYGDHTGYYNEQDWFPVFTVDRITMRRNPIYHSTYTGKPPDEPAVLGVALNEVFVPLLRRQLPEIVDFYLPPEGCSYRLAVVSIRKQYAGHAKRVMFGLWSVLRQFMYTKFIVVVDEDIDPRDWTEVVWAMTTRMDPVRDTVLVENAPIDYLDFASPVSGLGGKMGLDATNKWPGETSREWGTPIHMDEAVKRRVDAMWDTLGL.

Asparagine 177 is a Mn(2+) binding site. Residues 180–182 (IYR), 194–196 (RWL), and 199–200 (RG) contribute to the prenylated FMN site. Glutamate 243 provides a ligand contact to Mn(2+). Aspartate 314 acts as the Proton donor in catalysis.

The protein belongs to the UbiD family. Homohexamer. Requires prenylated FMN as cofactor. Mn(2+) is required as a cofactor.

The protein localises to the cell membrane. It carries out the reaction a 4-hydroxy-3-(all-trans-polyprenyl)benzoate + H(+) = a 2-(all-trans-polyprenyl)phenol + CO2. It functions in the pathway cofactor biosynthesis; ubiquinone biosynthesis. Its function is as follows. Catalyzes the decarboxylation of 3-octaprenyl-4-hydroxy benzoate to 2-octaprenylphenol, an intermediate step in ubiquinone biosynthesis. The polypeptide is 3-octaprenyl-4-hydroxybenzoate carboxy-lyase (Bordetella pertussis (strain Tohama I / ATCC BAA-589 / NCTC 13251)).